The primary structure comprises 372 residues: tRNA-specific 2-thiouridylase MnmA (372 aa).

Residues 16-23 and Met-42 contribute to the ATP site; that span reads GMSGGVDS. Positions 102 to 104 are interaction with target base in tRNA; it reads NPD. Cys-107 acts as the Nucleophile in catalysis. Cys-107 and Cys-205 are oxidised to a cystine. Residue Gly-132 coordinates ATP. Residues 155–157 are interaction with tRNA; that stretch reads KDQ. Cys-205 serves as the catalytic Cysteine persulfide intermediate. An interaction with tRNA region spans residues 317-318; that stretch reads RY.

It belongs to the MnmA/TRMU family.

The protein localises to the cytoplasm. The catalysed reaction is S-sulfanyl-L-cysteinyl-[protein] + uridine(34) in tRNA + AH2 + ATP = 2-thiouridine(34) in tRNA + L-cysteinyl-[protein] + A + AMP + diphosphate + H(+). Catalyzes the 2-thiolation of uridine at the wobble position (U34) of tRNA, leading to the formation of s(2)U34. This Shewanella baltica (strain OS223) protein is tRNA-specific 2-thiouridylase MnmA.